A 138-amino-acid chain; its full sequence is Acidic phospholipase A2 2 (138 aa).

Residues 1–16 form the signal peptide; it reads MRTLWIVAVWLTGVEG. 7 disulfides stabilise this stretch: Cys-42–Cys-131, Cys-44–Cys-60, Cys-59–Cys-111, Cys-65–Cys-138, Cys-66–Cys-104, Cys-73–Cys-97, and Cys-91–Cys-102. Tyr-43, Gly-45, and Gly-47 together coordinate Ca(2+). His-63 is an active-site residue. Asp-64 is a binding site for Ca(2+). Residue Asp-105 is part of the active site.

In terms of assembly, monomer. Ca(2+) is required as a cofactor. As to expression, expressed by the venom gland.

It localises to the secreted. It carries out the reaction a 1,2-diacyl-sn-glycero-3-phosphocholine + H2O = a 1-acyl-sn-glycero-3-phosphocholine + a fatty acid + H(+). In terms of biological role, snake venom phospholipase that inhibits ADP- and collagen-induced human platelet aggregation. This inhibition is completely inhibited by abolition of catalytic activity in case of collagen as inducer and partially inhibited in case of ADP as inducer. PLA2 catalyzes the calcium-dependent hydrolysis of the 2-acyl groups in 3-sn-phosphoglycerides. The sequence is that of Acidic phospholipase A2 2 from Macrovipera lebetinus (Levantine viper).